A 445-amino-acid polypeptide reads, in one-letter code: Probable multidrug resistance protein YpnP (445 aa).

Transmembrane regions (helical) follow at residues 15 to 35, 49 to 69, 95 to 115, 136 to 156, 168 to 188, 194 to 214, 240 to 260, 277 to 297, 314 to 334, 355 to 375, 384 to 404, and 411 to 431; these read LVLF…FQFI, LGAA…ILGL, AFVV…FFLS, LQIQ…STVL, FIAF…SVFR, AAYS…FYVI, IPAG…MSVV, LDSI…SMAG, LGVI…WVFG, LKWI…NGIV, VLVL…ALFS, and GIGL…FLYY.

It belongs to the multi antimicrobial extrusion (MATE) (TC 2.A.66.1) family.

Its subcellular location is the cell membrane. This Bacillus subtilis (strain 168) protein is Probable multidrug resistance protein YpnP (ypnP).